The primary structure comprises 400 residues: CRAL-TRIO domain-containing protein C34C12.6 (400 aa).

The CRAL-TRIO domain maps to 87 to 270 (ELPSIAPFLQ…EYGGEFVNTV (184 aa)). The region spanning 304–399 (PKSSHKDVSP…TLKLEYTVAI (96 aa)) is the GOLD domain.

The chain is CRAL-TRIO domain-containing protein C34C12.6 from Caenorhabditis elegans.